A 95-amino-acid chain; its full sequence is Aspartyl/glutamyl-tRNA(Asn/Gln) amidotransferase subunit C (95 aa).

This sequence belongs to the GatC family. As to quaternary structure, heterotrimer of A, B and C subunits.

The catalysed reaction is L-glutamyl-tRNA(Gln) + L-glutamine + ATP + H2O = L-glutaminyl-tRNA(Gln) + L-glutamate + ADP + phosphate + H(+). It catalyses the reaction L-aspartyl-tRNA(Asn) + L-glutamine + ATP + H2O = L-asparaginyl-tRNA(Asn) + L-glutamate + ADP + phosphate + 2 H(+). Functionally, allows the formation of correctly charged Asn-tRNA(Asn) or Gln-tRNA(Gln) through the transamidation of misacylated Asp-tRNA(Asn) or Glu-tRNA(Gln) in organisms which lack either or both of asparaginyl-tRNA or glutaminyl-tRNA synthetases. The reaction takes place in the presence of glutamine and ATP through an activated phospho-Asp-tRNA(Asn) or phospho-Glu-tRNA(Gln). This is Aspartyl/glutamyl-tRNA(Asn/Gln) amidotransferase subunit C from Dinoroseobacter shibae (strain DSM 16493 / NCIMB 14021 / DFL 12).